The following is a 252-amino-acid chain: 5'-nucleotidase SurE (252 aa).

Residues D8, D9, S42, and N94 each coordinate a divalent metal cation.

Belongs to the SurE nucleotidase family. The cofactor is a divalent metal cation.

The protein localises to the cytoplasm. The enzyme catalyses a ribonucleoside 5'-phosphate + H2O = a ribonucleoside + phosphate. Its function is as follows. Nucleotidase that shows phosphatase activity on nucleoside 5'-monophosphates. This Ehrlichia ruminantium (strain Welgevonden) protein is 5'-nucleotidase SurE.